Here is a 72-residue protein sequence, read N- to C-terminus: Conotoxin VnMKLT2-021 (72 aa).

Residues 1–22 (MKLTCVLIVAVLFLTACQLTTA) form the signal peptide. The propeptide occupies 23–45 (ASYARSERQHPDLGSSDQNSKLT). Cystine bridges form between cysteine 48–cysteine 62, cysteine 55–cysteine 66, and cysteine 61–cysteine 71.

The protein belongs to the conotoxin O1 superfamily. Expressed by the venom duct.

It localises to the secreted. This chain is Conotoxin VnMKLT2-021, found in Conus ventricosus (Mediterranean cone).